The primary structure comprises 253 residues: LexA repressor (253 aa).

Residues 1-33 (MTSQGRGTRRGGARGNVRAFPENPADAAGLTPR) form a disordered region. A DNA-binding region (H-T-H motif) is located at residues 54-74 (VREIGEAVGLTSTSSVAHQLK). Active-site for autocatalytic cleavage activity residues include serine 177 and lysine 214.

The protein belongs to the peptidase S24 family. Homodimer.

The catalysed reaction is Hydrolysis of Ala-|-Gly bond in repressor LexA.. Its function is as follows. Represses a number of genes involved in the response to DNA damage (SOS response), including recA and lexA. In the presence of single-stranded DNA, RecA interacts with LexA causing an autocatalytic cleavage which disrupts the DNA-binding part of LexA, leading to derepression of the SOS regulon and eventually DNA repair. The polypeptide is LexA repressor (Frankia alni (strain DSM 45986 / CECT 9034 / ACN14a)).